A 180-amino-acid chain; its full sequence is uncharacterized protein (180 aa).

A run of 6 helical transmembrane segments spans residues 4–24 (KSNIKLILATDLLAVLILSLF), 25–45 (IKNFKMVLAFLLAVFVIWLFI), 57–77 (NLLAMSVGFIEGILIFLGIIY), 81–101 (FLDITLGIFAILILIVMGILF), 124–144 (FLTLISIFGMLLTIYVFLLIL), and 156–176 (IIRTIMLVITANMFIIEFYTF).

It localises to the cell membrane. This is an uncharacterized protein from Methanocaldococcus jannaschii (strain ATCC 43067 / DSM 2661 / JAL-1 / JCM 10045 / NBRC 100440) (Methanococcus jannaschii).